A 264-amino-acid polypeptide reads, in one-letter code: 3-methyl-2-oxobutanoate hydroxymethyltransferase (264 aa).

Asp42 and Asp81 together coordinate Mg(2+). Residues 42 to 43 (DS), Asp81, and Lys110 each bind 3-methyl-2-oxobutanoate. Glu112 contributes to the Mg(2+) binding site. Glu179 serves as the catalytic Proton acceptor.

The protein belongs to the PanB family. As to quaternary structure, homodecamer; pentamer of dimers. Mg(2+) serves as cofactor.

It localises to the cytoplasm. It catalyses the reaction 3-methyl-2-oxobutanoate + (6R)-5,10-methylene-5,6,7,8-tetrahydrofolate + H2O = 2-dehydropantoate + (6S)-5,6,7,8-tetrahydrofolate. The protein operates within cofactor biosynthesis; (R)-pantothenate biosynthesis; (R)-pantoate from 3-methyl-2-oxobutanoate: step 1/2. Its function is as follows. Catalyzes the reversible reaction in which hydroxymethyl group from 5,10-methylenetetrahydrofolate is transferred onto alpha-ketoisovalerate to form ketopantoate. In Francisella tularensis subsp. tularensis (strain FSC 198), this protein is 3-methyl-2-oxobutanoate hydroxymethyltransferase.